Reading from the N-terminus, the 829-residue chain is MWHRALGPGWKLLLALALTSLQGARGAEEEPSSDGSFQVVTFKWHHVQDPYIIALWILVASLAKIVFHLSHKVTSIVPESALLIVLGLVLGGIVWAADHIASFTLTPTLFFFYLLPPIVLDAGYFMPNRLFFGNLGTILLYAVIGTIWNAATTGLSLYGVFLSGLMGELKIGLLDFLLFGSLIAAVDPVAVLAVFEEVHVNEVLFIIVFGESLLNDAVTVVLYNVFESFVTLGGDAVTGVDCVKGIVSFFVVSLGGTLVGVIFAFLLSLVTRFTKHVRIIEPGFVFVISYLSYLTSEMLSLSSILAITFCGICCQKYVKANISEQSATTVRYTMKMLASGAETIIFMFLGISAVNPDIWTWNTAFVLLTLVFISVYRAIGVVLQTWILNRYRMVQLETIDQVVMSYGGLRGAVAYALVVLLDEKKVKEKNLFVSTTLIVVFFTVIFQGLTIKPLVQWLKVKRSEHREPKLNEKLHGRAFDHILSAIEDISGQIGHNYLRDKWSNFDRKFLSKVLMRRSAQKSRDRILNVFHELNLKDAISYVAEGERRGSLAFIRSPSTDNMVNVDFNTPRPSTVEASVSYFLRENVSAVCLDMQSLEQRRRSIRDTEDMVTHHTLQQYLYKPRQEYKHLYSRHELTPNEDEKQDKEIFHRTMRKRLESFKSAKLGINQNKKAAKLYKRERAQKRRNSSIPNGKLPMENLAHNYTIKEKDLELSEHEEATNYEEISGGIEFLASVTQDVASDSGAGIDNPVFSPDEDLDPSILSRVPPWLSPGETVVPSQRARVQIPNSPSNFRRLTPFRLSNKSVDSFLQADGHEEQLQPAAPESTHM.

Positions 1-26 are cleaved as a signal peptide; it reads MWHRALGPGWKLLLALALTSLQGARG. Residues 27-46 lie on the Extracellular side of the membrane; the sequence is AEEEPSSDGSFQVVTFKWHH. The helical transmembrane segment at 47–69 threads the bilayer; the sequence is VQDPYIIALWILVASLAKIVFHL. Over 70 to 77 the chain is Cytoplasmic; it reads SHKVTSIV. A helical transmembrane segment spans residues 78-97; that stretch reads PESALLIVLGLVLGGIVWAA. Residues 98 to 106 are Extracellular-facing; the sequence is DHIASFTLT. Residues 107-124 form a helical membrane-spanning segment; that stretch reads PTLFFFYLLPPIVLDAGY. Topologically, residues 125–127 are cytoplasmic; sequence FMP. A helical membrane pass occupies residues 128–163; the sequence is NRLFFGNLGTILLYAVIGTIWNAATTGLSLYGVFLS. Positions 133, 136, and 137 each coordinate a 1,2-diacyl-sn-glycero-3-phospho-(1D-myo-inositol). The Extracellular portion of the chain corresponds to 164–176; that stretch reads GLMGELKIGLLDF. A helical transmembrane segment spans residues 177–198; that stretch reads LLFGSLIAAVDPVAVLAVFEEV. At 199 to 200 the chain is on the cytoplasmic side; the sequence is HV. The helical transmembrane segment at 201-232 threads the bilayer; it reads NEVLFIIVFGESLLNDAVTVVLYNVFESFVTL. Over 233–239 the chain is Extracellular; it reads GGDAVTG. The chain crosses the membrane as a helical span at residues 240-274; it reads VDCVKGIVSFFVVSLGGTLVGVIFAFLLSLVTRFT. The Cytoplasmic segment spans residues 275 to 276; it reads KH. The helical transmembrane segment at 277–299 threads the bilayer; sequence VRIIEPGFVFVISYLSYLTSEML. At 300 to 301 the chain is on the extracellular side; sequence SL. The helical transmembrane segment at 302-318 threads the bilayer; the sequence is SSILAITFCGICCQKYV. Over 319–325 the chain is Cytoplasmic; the sequence is KANISEQ. Residues 326–354 form a helical membrane-spanning segment; that stretch reads SATTVRYTMKMLASGAETIIFMFLGISAV. Residues 355-362 are Extracellular-facing; it reads NPDIWTWN. The chain crosses the membrane as a helical span at residues 363 to 384; the sequence is TAFVLLTLVFISVYRAIGVVLQ. The Cytoplasmic portion of the chain corresponds to 385-397; the sequence is TWILNRYRMVQLE. Position 393 (Met-393) interacts with a 1,2-diacyl-sn-glycero-3-phospho-(1D-myo-inositol). Residues 398–421 form a helical membrane-spanning segment; sequence TIDQVVMSYGGLRGAVAYALVVLL. The Extracellular portion of the chain corresponds to 422-428; sequence DEKKVKE. The chain crosses the membrane as a helical span at residues 429 to 462; it reads KNLFVSTTLIVVFFTVIFQGLTIKPLVQWLKVKR. The Cytoplasmic portion of the chain corresponds to 463 to 829; it reads SEHREPKLNE…QPAAPESTHM (367 aa). Residues Gln-492, Ile-493, and His-495 each contribute to the a 1,2-diacyl-sn-glycero-3-phospho-(1D-myo-inositol) site. 2 positions are modified to phosphoserine: Ser-550 and Ser-558. The interaction with EZR stretch occupies residues 571–585; it reads RPSTVEASVSYFLRE. The interaction with NHERF4 stretch occupies residues 586 to 663; sequence NVSAVCLDMQ…RKRLESFKSA (78 aa). The interaction with AHCYL1 stretch occupies residues 587 to 691; sequence VSAVCLDMQS…AQKRRNSSIP (105 aa). Phosphoserine is present on residues Ser-588 and Ser-603. Phosphoserine; by SGK1 is present on Ser-659. Over residues 677–687 the composition is skewed to basic residues; that stretch reads YKRERAQKRRN. The disordered stretch occupies residues 677-696; the sequence is YKRERAQKRRNSSIPNGKLP. Phosphoserine is present on residues Ser-714, Ser-805, and Ser-808.

This sequence belongs to the monovalent cation:proton antiporter 1 (CPA1) transporter (TC 2.A.36) family. Homodimer. Found in the forms of complex and dynamic macromolecular complexes. Binds NHERF1 and NHERF2. Interacts with CHP1; this interaction increases trafficking and activity of SLC9A3 at the plasma membrane. Interacts with CHP2 and SHANK2. Interacts with PDZK1 (via C-terminal PDZ domain). Interacts with NHERF4 and interactions decrease in response to elevated calcium ion levels. Interacts with AHCYL1; the interaction is required for SLC9A3 activity. Interacts with EZR; interaction targets SLC9A3 to the apical membrane. Interacts with SNX27 (via PDZ domains); directs SLC9A3 membrane insertion from early endosomes to the plasma membrane. In terms of processing, phosphorylated by PKA, which inhibits activity. Phosphorylation at Ser-659 by SGK1 is associated with increased abundance at the cell membrane. Phosphorylation at Ser-714 by CSNK2A1 regulates SLC9A3 activity through the formation of multiple signaling complexes.

The protein localises to the apical cell membrane. It localises to the cell membrane. It is found in the recycling endosome membrane. The protein resides in the early endosome membrane. The catalysed reaction is Na(+)(in) + H(+)(out) = Na(+)(out) + H(+)(in). With respect to regulation, seems to switch between active and inactive modes in response to various stimuli. Activated directly or indirectly by membrane phosphatidylinositol (PIs). Regulated by a variety of auxiliary proteins, which facilitate the maturation, cell surface expression and function of the transporter. Inhibited specifically by the drug tenapanor. In terms of biological role, plasma membrane Na(+)/H(+) antiporter. Exchanges intracellular H(+) ions for extracellular Na(+) in 1:1 stoichiometry, playing a key role in salt and fluid absorption and pH homeostasis. Major apical Na(+)/H(+) exchanger in kidney and intestine playing an important role in renal and intestine Na(+) absorption and blood pressure regulation. This is Sodium/hydrogen exchanger 3 from Mus musculus (Mouse).